Reading from the N-terminus, the 369-residue chain is MLPLPTWTLSDVDAILVLSFGGPEGQQDVIPFLENVTRGRGIPRERLEEVAVHYRHFGGISPLNALNREIIGNIIEVLSSRGLEIPVYFGNRNWHPFVNDTAEKMVRDGVRNVAVFATSAWGGYSGCRQYDEDIVRMNHHLEEKELPTLNCLKLRQFFDHPLFIEEMSSVVFQAARELGISALDELQLHQKVVFTAHSIPEVANENSGRKEDGPLYSRQVYEAASLVAKHLGISQERYDVVWQSASGNGQIPWLEPDILDYAKCQHDEGVSELVVAPIGFISDHMEVVWDLDHELQDLASDLGMSISRAATVGHTDSFATMIVELVEESLGVKPHQNLGTVPSKGCSFNGEPCEVNCCKPVQRPHSAKA.

The Fe-coproporphyrin III site is built by serine 61 and tyrosine 130. Fe(2+)-binding residues include histidine 197 and glutamate 286.

Belongs to the ferrochelatase family.

It localises to the cytoplasm. It carries out the reaction Fe-coproporphyrin III + 2 H(+) = coproporphyrin III + Fe(2+). The protein operates within porphyrin-containing compound metabolism; protoheme biosynthesis. Involved in coproporphyrin-dependent heme b biosynthesis. Catalyzes the insertion of ferrous iron into coproporphyrin III to form Fe-coproporphyrin III. The chain is Coproporphyrin III ferrochelatase from Corynebacterium diphtheriae (strain ATCC 700971 / NCTC 13129 / Biotype gravis).